The primary structure comprises 1220 residues: DNA-directed RNA polymerase subunit beta (1220 aa).

This sequence belongs to the RNA polymerase beta chain family. As to quaternary structure, the RNAP catalytic core consists of 2 alpha, 1 beta, 1 beta' and 1 omega subunit. When a sigma factor is associated with the core the holoenzyme is formed, which can initiate transcription.

The enzyme catalyses RNA(n) + a ribonucleoside 5'-triphosphate = RNA(n+1) + diphosphate. In terms of biological role, DNA-dependent RNA polymerase catalyzes the transcription of DNA into RNA using the four ribonucleoside triphosphates as substrates. This is DNA-directed RNA polymerase subunit beta from Mesomycoplasma hyopneumoniae (strain 232) (Mycoplasma hyopneumoniae).